A 113-amino-acid chain; its full sequence is Hydrogenase maturation factor HypA (113 aa).

Histidine 2 lines the Ni(2+) pocket. Positions 73, 76, 89, and 92 each coordinate Zn(2+).

This sequence belongs to the HypA/HybF family.

Involved in the maturation of [NiFe] hydrogenases. Required for nickel insertion into the metal center of the hydrogenase. This chain is Hydrogenase maturation factor HypA, found in Aeromonas hydrophila subsp. hydrophila (strain ATCC 7966 / DSM 30187 / BCRC 13018 / CCUG 14551 / JCM 1027 / KCTC 2358 / NCIMB 9240 / NCTC 8049).